The chain runs to 91 residues: Non-specific lipid-transfer protein 1 (91 aa).

4 disulfide bridges follow: Cys-4-Cys-51, Cys-14-Cys-28, Cys-29-Cys-74, and Cys-49-Cys-88.

It belongs to the plant LTP family. In terms of tissue distribution, detected in seeds (at protein level).

In terms of biological role, plant non-specific lipid-transfer proteins transfer phospholipids as well as galactolipids across membranes. May play a role in wax or cutin deposition in the cell walls of expanding epidermal cells and certain secretory tissues. The protein is Non-specific lipid-transfer protein 1 of Carum carvi (Caraway).